An 825-amino-acid chain; its full sequence is Phenylalanine--tRNA ligase beta subunit (825 aa).

Residues 39–154 (RTWADGVVLG…EAHPLGSDVR (116 aa)) form the tRNA-binding domain. The 96-residue stretch at 411–506 (PLERTLKLRL…RLYGYDRFSE (96 aa)) folds into the B5 domain. Mg(2+)-binding residues include Asp-484, Asp-490, Glu-493, and Glu-494. In terms of domain architecture, FDX-ACB spans 731 to 824 (SPFPAADRDI…LATQFPVTLR (94 aa)).

Belongs to the phenylalanyl-tRNA synthetase beta subunit family. Type 1 subfamily. In terms of assembly, tetramer of two alpha and two beta subunits. Requires Mg(2+) as cofactor.

It localises to the cytoplasm. The catalysed reaction is tRNA(Phe) + L-phenylalanine + ATP = L-phenylalanyl-tRNA(Phe) + AMP + diphosphate + H(+). This Synechococcus sp. (strain JA-2-3B'a(2-13)) (Cyanobacteria bacterium Yellowstone B-Prime) protein is Phenylalanine--tRNA ligase beta subunit.